The sequence spans 41 residues: MKVVSSLKSLKKRDKDCQIVQRRGKIFVINKKNKRFKAKQG.

Belongs to the bacterial ribosomal protein bL36 family.

The protein is Large ribosomal subunit protein bL36 of Rickettsia massiliae (strain Mtu5).